A 304-amino-acid polypeptide reads, in one-letter code: Homoserine kinase (304 aa).

90 to 100 (PLARGLGSSAS) is an ATP binding site.

It belongs to the GHMP kinase family. Homoserine kinase subfamily.

The protein localises to the cytoplasm. It catalyses the reaction L-homoserine + ATP = O-phospho-L-homoserine + ADP + H(+). It functions in the pathway amino-acid biosynthesis; L-threonine biosynthesis; L-threonine from L-aspartate: step 4/5. Functionally, catalyzes the ATP-dependent phosphorylation of L-homoserine to L-homoserine phosphate. In Staphylococcus aureus (strain JH9), this protein is Homoserine kinase.